The chain runs to 448 residues: Glucose-6-phosphate isomerase (448 aa).

Catalysis depends on Glu-290, which acts as the Proton donor. Catalysis depends on residues His-311 and Lys-425.

It belongs to the GPI family.

Its subcellular location is the cytoplasm. The catalysed reaction is alpha-D-glucose 6-phosphate = beta-D-fructose 6-phosphate. The protein operates within carbohydrate biosynthesis; gluconeogenesis. It functions in the pathway carbohydrate degradation; glycolysis; D-glyceraldehyde 3-phosphate and glycerone phosphate from D-glucose: step 2/4. Functionally, catalyzes the reversible isomerization of glucose-6-phosphate to fructose-6-phosphate. The protein is Glucose-6-phosphate isomerase of Oceanobacillus iheyensis (strain DSM 14371 / CIP 107618 / JCM 11309 / KCTC 3954 / HTE831).